Reading from the N-terminus, the 250-residue chain is 26 kDa periplasmic immunogenic protein (250 aa).

An N-terminal signal peptide occupies residues 1–28; that stretch reads MNTRASNFLAASFSTIMLVGAFSLPAFA.

The protein localises to the periplasm. This Brucella melitensis biotype 1 (strain ATCC 23456 / CCUG 17765 / NCTC 10094 / 16M) protein is 26 kDa periplasmic immunogenic protein (bp26).